The primary structure comprises 475 residues: 23S rRNA (uracil(1939)-C(5))-methyltransferase RlmD (475 aa).

The 76-residue stretch at 1 to 76 (MHRGDKPVNI…SRFSKAKVRE (76 aa)) folds into the TRAM domain. The [4Fe-4S] cluster site is built by C89, C95, C98, and C178. S-adenosyl-L-methionine contacts are provided by Q299, F328, N333, E349, D377, and D398. Catalysis depends on C431, which acts as the Nucleophile.

The protein belongs to the class I-like SAM-binding methyltransferase superfamily. RNA M5U methyltransferase family. RlmD subfamily.

It catalyses the reaction uridine(1939) in 23S rRNA + S-adenosyl-L-methionine = 5-methyluridine(1939) in 23S rRNA + S-adenosyl-L-homocysteine + H(+). Its function is as follows. Catalyzes the formation of 5-methyl-uridine at position 1939 (m5U1939) in 23S rRNA. The polypeptide is 23S rRNA (uracil(1939)-C(5))-methyltransferase RlmD (Polynucleobacter necessarius subsp. necessarius (strain STIR1)).